An 89-amino-acid polypeptide reads, in one-letter code: Small ribosomal subunit protein uS15 (89 aa).

Belongs to the universal ribosomal protein uS15 family. In terms of assembly, part of the 30S ribosomal subunit. Forms a bridge to the 50S subunit in the 70S ribosome, contacting the 23S rRNA.

Its function is as follows. One of the primary rRNA binding proteins, it binds directly to 16S rRNA where it helps nucleate assembly of the platform of the 30S subunit by binding and bridging several RNA helices of the 16S rRNA. Forms an intersubunit bridge (bridge B4) with the 23S rRNA of the 50S subunit in the ribosome. In Paramagnetospirillum magneticum (strain ATCC 700264 / AMB-1) (Magnetospirillum magneticum), this protein is Small ribosomal subunit protein uS15.